The chain runs to 454 residues: MGSSQSVEIPGGGTEGYHVLRVQENSPGHRAGLEPFFDFIVSISGSRLNKDNDTLKDLLKANVEKPVKMLIYSSKTLELREASVTPSNLWGGQGLLGVSIRFCSFDGANENVWHVLEVESNSPAALAGLRPHSDYIIGADTVMNESEDLFSLIETHEAKPLKLYVYNTDTDNCREVIITPNSAWGGEGSLGCGIGYGYLHRIPTRPFEEGKKISLPGQMTGTPITPLKDGFTQVQLSSVSPPSLSPPGTAGVEQSLSGLSISSAPPAVSNVLSTGVPTVPLLPPQVNQSLASVPPMNPAATLPSLMPLSAGLPNLPNLPSLSNFNLPAPHIMPGVGLPELGKPGLPPLPSLPPRNVPGIAPLPMPSDFLPSFPLVPEGSSAASAGEPLSSLPAMGPPSDPVMTTAKADTSSLTVDVMSPASKVPTTVEDRVSDCTPAMEKPVSAVTDANASGAS.

Gly-2 carries the N-myristoyl glycine lipid modification. PDZ GRASP-type domains are found at residues 15–105 (EGYH…FCSF) and 111–199 (NVWH…YGYL). Positions 15 to 215 (EGYHVLRVQE…PFEEGKKISL (201 aa)) are GRASP. Dimethylated arginine occurs at positions 30 and 47. The tract at residues 194 to 199 (IGYGYL) is important for membrane binding. Ser-214 is subject to Phosphoserine. Position 222 is a phosphothreonine (Thr-222). The residue at position 225 (Thr-225) is a Phosphothreonine; by MAPK. Residues 377–454 (EGSSAASAGE…VTDANASGAS (78 aa)) form a disordered region. Ser-411 carries the phosphoserine modification. At Thr-435 the chain carries Phosphothreonine. Phosphoserine occurs at positions 443 and 451.

This sequence belongs to the GORASP family. In terms of assembly, homodimer. Homooligomer. ER stress induces phosphorylation-dependent monomerization. Interacts with BLZF1/Golgin 45. Identified in a complex with RAB2 and GORASP2. Interacts with JAM2 and JAM3. Interacts with members of the p24 cargo receptors. Interacts with CNIH1 and the cytoplasmic domain of transmembrane TGFA, prior its transit in the trans-Golgi. Interacts with KCTD5. Interacts with TMED2 and TMED3. Interacts with SEC16A in response to ER stress. Interacts (via PDZ GRASP-type 1 domain) with core-glycosylated CFTR in response to ER stress. In terms of processing, myristoylated. Myristoylation is essential for the Golgi targeting. Palmitoylated. Post-translationally, phosphorylated in mitotic cells. ER stress-induced phosphorylation at Ser-443 induces monomerization and subsequent relocalization from Golgi to ER which is essential for mediating unconventional (ER/Golgi-independent) trafficking of CFTR to the cell membrane. In terms of tissue distribution, detected in lung, brain, heart, liver and testis.

The protein localises to the golgi apparatus membrane. Its subcellular location is the endoplasmic reticulum membrane. The protein resides in the golgi apparatus. Its function is as follows. Key structural protein of the Golgi apparatus. The membrane cisternae of the Golgi apparatus adhere to each other to form stacks, which are aligned side by side to form the Golgi ribbon. Acting in concert with GORASP1/GRASP65, is required for the formation and maintenance of the Golgi ribbon, and may be dispensable for the formation of stacks. However, other studies suggest that GORASP2 plays a role in the assembly and membrane stacking of the Golgi cisternae, and in the process by which Golgi stacks reform after breakdown during mitosis and meiosis. May regulate the intracellular transport and presentation of a defined set of transmembrane proteins, such as transmembrane TGFA. Required for normal acrosome formation during spermiogenesis and normal male fertility, probably by promoting colocalization of JAM2 and JAM3 at contact sites between germ cells and Sertoli cells. Mediates ER stress-induced unconventional (ER/Golgi-independent) trafficking of core-glycosylated CFTR to cell membrane. This is Golgi reassembly-stacking protein 2 (Gorasp2) from Rattus norvegicus (Rat).